A 798-amino-acid polypeptide reads, in one-letter code: Putative antiporter subunit mnhA2 (798 aa).

The next 21 helical transmembrane spans lie at 1 to 21 (MSLV…LFTL), 33 to 53 (IALL…PSVM), 78 to 98 (GLSL…VYYA), 109 to 129 (LPRF…IVTA), 133 to 153 (ILMY…IVYW), 167 to 187 (FMIT…IYIV), 209 to 229 (FIPI…QFPF), 241 to 261 (TPVS…FLLF), 272 to 292 (FYIY…AVNA), 300 to 320 (AILA…VGLG), 337 to 357 (MILF…GALF), 381 to 401 (VFPI…GIPF), 431 to 451 (IITV…VYMI), 472 to 492 (PFLF…IFFI), 526 to 546 (GFNL…IMAL), 593 to 613 (ITIT…QAGF), 625 to 645 (GPIE…LTFI), 649 to 669 (LTMV…FILM), 674 to 694 (LALT…VSFS), 710 to 730 (AVKI…VFIA), and 766 to 786 (IDTL…YTLL).

This sequence belongs to the CPA3 antiporters (TC 2.A.63) subunit A family. May form a heterooligomeric complex that consists of seven subunits: mnhA2, mnhB2, mnhC2, mnhD2, mnhE2, mnhF2 and mnhG2.

The protein resides in the cell membrane. The chain is Putative antiporter subunit mnhA2 (mnhA2) from Staphylococcus saprophyticus subsp. saprophyticus (strain ATCC 15305 / DSM 20229 / NCIMB 8711 / NCTC 7292 / S-41).